Consider the following 753-residue polypeptide: Taperin (753 aa).

The segment at 141 to 348 (FDSPAAPRRR…IRPSSKPDME (208 aa)) is disordered. The span at 182 to 197 (PAPPVLPSQPAPPISP) shows a compositional bias: pro residues. Polar residues-rich tracts occupy residues 230–239 (LQKTGSNSFT) and 250–263 (VNRSLSNGPMTQES). Phosphoserine is present on serine 274. A compositionally biased stretch (low complexity) spans 300 to 322 (TPSATPVGPPAFLAPSPASATPS). Polar residues predominate over residues 323–335 (QRQWVSSATSAND). Residues 337–347 (FEIRPSSKPDM) show a composition bias toward basic and acidic residues. Phosphoserine is present on residues serine 402, serine 458, and serine 502. The segment at 438-488 (GCPRPAISDTDKSVRRQRPASPPPFLPATTEAEPAEGLGVPGLTKNGQEPV) is disordered. Disordered stretches follow at residues 544-583 (FTVVPKRKPGTLQEPHLSQTNGQFQQGAEEQDADSLSGPH) and 637-676 (FEYPSESSLAQEEAEEEEEEEEEEEGEDGEEEEVGPDSEK). A compositionally biased stretch (polar residues) spans 559–571 (HLSQTNGQFQQGA). Residues 648–672 (EEAEEEEEEEEEEEGEDGEEEEVGP) are compositionally biased toward acidic residues.

It belongs to the taperin family. Interacts with GRXCR2; the interaction restricts TPRN to the stereocilum basal region. Interacts with actin ACTB; the interaction may stabilize stereocilia. Interacts with CLIC5. Interacts with PTPRQ. TPRN, CLIC5 and PTPQR form concentric rings at the base of stereocilia and may form a complex. Interacts with phosphatase PPP1CA; the interaction results in inhibition of PPC1A phosphatase activity. Interacts with DNA damage response proteins XRCC6/KU70, XRCC5/KU80, PARP1, TOP1 and TOP2A; these interactions recruit TPRN to sites of DNA damage where it may play a role in DNA repair.

It localises to the cell projection. The protein resides in the stereocilium. Its subcellular location is the microvillus. The protein localises to the nucleus. It is found in the nucleoplasm. It localises to the cytoplasm. Essential for hearing. Required for maintenance of stereocilia on both inner and outer hair cells. Necessary for the integrity of the stereociliary rootlet. May act as an actin cytoskeleton regulator involved in the regulation of actin dynamics at the pointed end in hair cells. Forms rings at the base of stereocilia and binds actin filaments in the stereocilia which may stabilize the stereocilia. Acts as a strong inhibitor of PPP1CA phosphatase activity. Recruited to sites of DNA damage and may play a role in DNA damage repair. In Rattus norvegicus (Rat), this protein is Taperin (Tprn).